The following is a 105-amino-acid chain: Urease subunit beta (105 aa).

The protein belongs to the urease beta subunit family. As to quaternary structure, heterotrimer of UreA (gamma), UreB (beta) and UreC (alpha) subunits. Three heterotrimers associate to form the active enzyme.

It localises to the cytoplasm. The enzyme catalyses urea + 2 H2O + H(+) = hydrogencarbonate + 2 NH4(+). The protein operates within nitrogen metabolism; urea degradation; CO(2) and NH(3) from urea (urease route): step 1/1. The sequence is that of Urease subunit beta from Mycobacterium sp. (strain JLS).